The primary structure comprises 340 residues: 7,8-didemethyl-8-hydroxy-5-deazariboflavin synthase (340 aa).

The region spanning 25–256 is the Radical SAM core domain; that stretch reads ATYSPAYTIV…SDITIQIPPN (232 aa). Cysteine 39, cysteine 43, and cysteine 46 together coordinate [4Fe-4S] cluster.

This sequence belongs to the radical SAM superfamily. CofG family. As to quaternary structure, consists of two subunits, CofG and CofH. [4Fe-4S] cluster serves as cofactor.

It carries out the reaction 5-amino-5-(4-hydroxybenzyl)-6-(D-ribitylimino)-5,6-dihydrouracil + S-adenosyl-L-methionine = 7,8-didemethyl-8-hydroxy-5-deazariboflavin + 5'-deoxyadenosine + L-methionine + NH4(+) + H(+). It participates in cofactor biosynthesis; coenzyme F0 biosynthesis. Catalyzes the radical-mediated synthesis of 7,8-didemethyl-8-hydroxy-5-deazariboflavin from 5-amino-5-(4-hydroxybenzyl)-6-(D-ribitylimino)-5,6-dihydrouracil. The sequence is that of 7,8-didemethyl-8-hydroxy-5-deazariboflavin synthase from Trichormus variabilis (strain ATCC 29413 / PCC 7937) (Anabaena variabilis).